The following is a 719-amino-acid chain: Endonuclease MutS2 (719 aa).

273–280 is an ATP binding site; the sequence is GPNTGGKT. The 76-residue stretch at 644–719 folds into the Smr domain; that stretch reads LDLRGYRYED…GFGVTVATLK (76 aa).

Belongs to the DNA mismatch repair MutS family. MutS2 subfamily. Homodimer. Binds to stalled ribosomes, contacting rRNA.

In terms of biological role, endonuclease that is involved in the suppression of homologous recombination and thus may have a key role in the control of bacterial genetic diversity. Acts as a ribosome collision sensor, splitting the ribosome into its 2 subunits. Detects stalled/collided 70S ribosomes which it binds and splits by an ATP-hydrolysis driven conformational change. Acts upstream of the ribosome quality control system (RQC), a ribosome-associated complex that mediates the extraction of incompletely synthesized nascent chains from stalled ribosomes and their subsequent degradation. Probably generates substrates for RQC. This Staphylococcus aureus protein is Endonuclease MutS2.